Consider the following 218-residue polypeptide: Large ribosomal subunit protein uL3 (218 aa).

Positions 124–162 (KRHGFSRGPMTHGSKNHREPGSTGAGTTPGRIYPGKRMA) are disordered.

Belongs to the universal ribosomal protein uL3 family. In terms of assembly, part of the 50S ribosomal subunit. Forms a cluster with proteins L14 and L19.

In terms of biological role, one of the primary rRNA binding proteins, it binds directly near the 3'-end of the 23S rRNA, where it nucleates assembly of the 50S subunit. The sequence is that of Large ribosomal subunit protein uL3 from Synechococcus sp. (strain CC9605).